The chain runs to 37 residues: ECKTNKMSCSLHEECCRFRCCFHGKCQTSVFGCWVDP.

4 disulfides stabilise this stretch: Cys2-Cys16, Cys9-Cys21, Cys15-Cys26, and Cys20-Cys33. A 4-carboxyglutamate mark is found at Glu13 and Glu14. Trp34 carries the 6'-bromotryptophan modification.

In terms of tissue distribution, expressed by the venom duct.

The protein localises to the secreted. Its function is as follows. Causes hyperactivity, circular motion, convulsion, urination and death, when injected into 13- to 15-day-old mice. Causes gasping, backward swimming or swimming in a vertical direction and death, when intraperitoneally injected into goldfish. The protein is Conotoxin r11e of Conus radiatus (Rayed cone).